Consider the following 612-residue polypeptide: Dihydroxy-acid dehydratase (612 aa).

D81 serves as a coordination point for Mg(2+). C122 contacts [2Fe-2S] cluster. Mg(2+)-binding residues include D123 and K124. K124 carries the post-translational modification N6-carboxylysine. C195 is a [2Fe-2S] cluster binding site. E491 provides a ligand contact to Mg(2+). The active-site Proton acceptor is S517.

Belongs to the IlvD/Edd family. Homodimer. [2Fe-2S] cluster is required as a cofactor. The cofactor is Mg(2+).

The catalysed reaction is (2R)-2,3-dihydroxy-3-methylbutanoate = 3-methyl-2-oxobutanoate + H2O. It carries out the reaction (2R,3R)-2,3-dihydroxy-3-methylpentanoate = (S)-3-methyl-2-oxopentanoate + H2O. Its pathway is amino-acid biosynthesis; L-isoleucine biosynthesis; L-isoleucine from 2-oxobutanoate: step 3/4. The protein operates within amino-acid biosynthesis; L-valine biosynthesis; L-valine from pyruvate: step 3/4. Functionally, functions in the biosynthesis of branched-chain amino acids. Catalyzes the dehydration of (2R,3R)-2,3-dihydroxy-3-methylpentanoate (2,3-dihydroxy-3-methylvalerate) into 2-oxo-3-methylpentanoate (2-oxo-3-methylvalerate) and of (2R)-2,3-dihydroxy-3-methylbutanoate (2,3-dihydroxyisovalerate) into 2-oxo-3-methylbutanoate (2-oxoisovalerate), the penultimate precursor to L-isoleucine and L-valine, respectively. In Haemophilus influenzae (strain PittGG), this protein is Dihydroxy-acid dehydratase.